The sequence spans 355 residues: Syntaxin-5 (355 aa).

Residues 1 to 333 (MIPRKRYGSK…KYFQSVTSNR (333 aa)) are Cytoplasmic-facing. The IxM motif; signal for cargo packaging into COPII-coated vesicles signature appears at 245–247 (IDM). Residues 263–325 (DSYIQSRADT…EAAHSEILKY (63 aa)) form the t-SNARE coiled-coil homology domain. A coiled-coil region spans residues 287–318 (FQQLAHMVKEQEETIQRIDENVLGAQLDVEAA). The chain crosses the membrane as a helical; Anchor for type IV membrane protein span at residues 334-354 (WLMVKIFLILIVFFIIFVVFL). Position 355 (A355) is a topological domain, vesicular.

This sequence belongs to the syntaxin family. As to quaternary structure, part of a ternary complex containing STX5A, NSFL1C and VCP. Part of a unique SNARE complex composed of the Golgi SNAREs GOSR1, GOSR2, YKT6 and VTI1A. Component of a SNARE complex consisting of STX5, YKT6, GOSR1 and BET1L. Interacts with BET1L. Interacts with BET1. Interacts with COG4. Interacts with GM130/GOLGA2. Interacts (via IxM motif) with SEC24C and SEC24D; mediates STX5 packaging into COPII-coated vesicles. Interacts with VLDLR; this interaction mediates VLDLR translocation from the endoplasmic reticulum to the plasma membrane.

Its subcellular location is the endoplasmic reticulum-Golgi intermediate compartment membrane. It is found in the golgi apparatus membrane. Functionally, mediates endoplasmic reticulum to Golgi transport. Together with p115/USO1 and GM130/GOLGA2, involved in vesicle tethering and fusion at the cis-Golgi membrane to maintain the stacked and inter-connected structure of the Golgi apparatus. Required for Golgi to endoplasmic reticulum retrogade transport, and for intra-Golgi transport. The sequence is that of Syntaxin-5 (Stx5) from Mus musculus (Mouse).